A 144-amino-acid chain; its full sequence is UPF0306 protein Spro_0510 (144 aa).

It belongs to the UPF0306 family.

This is UPF0306 protein Spro_0510 from Serratia proteamaculans (strain 568).